We begin with the raw amino-acid sequence, 324 residues long: Adenosine kinase (324 aa).

Residues S8, D12, S36, G48, N52, F102, F116, and 172–173 (QQ) contribute to the substrate site. ATP contacts are provided by residues N195, 223 to 228 (TLGPKG), and G256. Residue D257 coordinates substrate. The Proton acceptor role is filled by D257.

Belongs to the carbohydrate kinase PfkB family. As to quaternary structure, homodimer. Requires Mg(2+) as cofactor.

It catalyses the reaction adenosine + ATP = AMP + ADP + H(+). The enzyme catalyses adenosine + GTP = GDP + AMP + H(+). It carries out the reaction dGTP + adenosine = dGDP + AMP + H(+). The protein operates within purine metabolism; AMP biosynthesis via salvage pathway; AMP from adenosine: step 1/1. In terms of biological role, catalyzes the phosphorylation of adenosine to adenosine monophosphate (AMP). Prefers dGTP and GTP to ATP as phosphate donors in vitro. The polypeptide is Adenosine kinase (adoK) (Mycobacterium bovis (strain ATCC BAA-935 / AF2122/97)).